The following is a 192-amino-acid chain: Phosphoheptose isomerase (192 aa).

One can recognise an SIS domain in the interval 37–192; sequence LADSFKAGGK…IQLIEKEMVK (156 aa). Substrate is bound at residue 52–54; the sequence is NGG. Residues His61 and Glu65 each coordinate Zn(2+). Substrate-binding positions include Glu65, 93 to 94, 119 to 121, Ser124, and Gln172; these read ND and STS. Residues Gln172 and His180 each contribute to the Zn(2+) site.

This sequence belongs to the SIS family. GmhA subfamily. As to quaternary structure, homotetramer. Zn(2+) serves as cofactor.

The protein resides in the cytoplasm. The catalysed reaction is 2 D-sedoheptulose 7-phosphate = D-glycero-alpha-D-manno-heptose 7-phosphate + D-glycero-beta-D-manno-heptose 7-phosphate. It functions in the pathway carbohydrate biosynthesis; D-glycero-D-manno-heptose 7-phosphate biosynthesis; D-glycero-alpha-D-manno-heptose 7-phosphate and D-glycero-beta-D-manno-heptose 7-phosphate from sedoheptulose 7-phosphate: step 1/1. Its function is as follows. Catalyzes the isomerization of sedoheptulose 7-phosphate in D-glycero-D-manno-heptose 7-phosphate. The chain is Phosphoheptose isomerase from Enterobacter sp. (strain 638).